A 411-amino-acid polypeptide reads, in one-letter code: Argininosuccinate synthase (411 aa).

An ATP-binding site is contributed by 11–19; that stretch reads AYSGGLDTS. Tyr-88 contributes to the L-citrulline binding site. Gly-118 contacts ATP. 3 residues coordinate L-aspartate: Thr-120, Asn-124, and Asp-125. Asn-124 serves as a coordination point for L-citrulline. L-citrulline contacts are provided by Arg-128, Ser-176, Glu-261, and Tyr-273.

The protein belongs to the argininosuccinate synthase family. Type 1 subfamily. As to quaternary structure, homotetramer.

Its subcellular location is the cytoplasm. It catalyses the reaction L-citrulline + L-aspartate + ATP = 2-(N(omega)-L-arginino)succinate + AMP + diphosphate + H(+). Its pathway is amino-acid biosynthesis; L-arginine biosynthesis; L-arginine from L-ornithine and carbamoyl phosphate: step 2/3. The polypeptide is Argininosuccinate synthase (Lactiplantibacillus plantarum (strain ATCC BAA-793 / NCIMB 8826 / WCFS1) (Lactobacillus plantarum)).